Consider the following 227-residue polypeptide: NADH-quinone oxidoreductase subunit C (227 aa).

The protein belongs to the complex I 30 kDa subunit family. NDH-1 is composed of 14 different subunits. Subunits NuoB, C, D, E, F, and G constitute the peripheral sector of the complex.

The protein localises to the cell inner membrane. It carries out the reaction a quinone + NADH + 5 H(+)(in) = a quinol + NAD(+) + 4 H(+)(out). Its function is as follows. NDH-1 shuttles electrons from NADH, via FMN and iron-sulfur (Fe-S) centers, to quinones in the respiratory chain. The immediate electron acceptor for the enzyme in this species is believed to be ubiquinone. Couples the redox reaction to proton translocation (for every two electrons transferred, four hydrogen ions are translocated across the cytoplasmic membrane), and thus conserves the redox energy in a proton gradient. The protein is NADH-quinone oxidoreductase subunit C of Coxiella burnetii (strain RSA 331 / Henzerling II).